Consider the following 165-residue polypeptide: Endoribonuclease YbeY (165 aa).

Residues histidine 130, histidine 134, and histidine 140 each contribute to the Zn(2+) site.

It belongs to the endoribonuclease YbeY family. Requires Zn(2+) as cofactor.

It localises to the cytoplasm. Functionally, single strand-specific metallo-endoribonuclease involved in late-stage 70S ribosome quality control and in maturation of the 3' terminus of the 16S rRNA. The protein is Endoribonuclease YbeY of Streptococcus pneumoniae serotype 4 (strain ATCC BAA-334 / TIGR4).